Reading from the N-terminus, the 230-residue chain is tRNA pseudouridine synthase B (230 aa).

Residue Asp-45 is the Nucleophile of the active site.

This sequence belongs to the pseudouridine synthase TruB family. Type 1 subfamily.

It catalyses the reaction uridine(55) in tRNA = pseudouridine(55) in tRNA. In terms of biological role, responsible for synthesis of pseudouridine from uracil-55 in the psi GC loop of transfer RNAs. The chain is tRNA pseudouridine synthase B from Endomicrobium trichonymphae.